Here is an 83-residue protein sequence, read N- to C-terminus: Apolipoprotein C-I, acidic form (83 aa).

Positions 1–26 (MRLFLSLPVLVVVLSIVLEGPAPAQG) are cleaved as a signal peptide.

The protein belongs to the apolipoprotein C1 family.

The protein localises to the secreted. The sequence is that of Apolipoprotein C-I, acidic form (APOC1A) from Pan paniscus (Pygmy chimpanzee).